A 324-amino-acid polypeptide reads, in one-letter code: Annexin A3 (324 aa).

Annexin repeat units lie at residues 19–90 (FNPS…ALIT), 91–162 (APAV…TLAD), 174–246 (HLAK…AVVR), and 250–321 (NTPA…KICG). Position 178 is an N6-acetyllysine (lysine 178). Threonine 268 is modified (phosphothreonine).

This sequence belongs to the annexin family.

Its function is as follows. Inhibitor of phospholipase A2, also possesses anti-coagulant properties. The sequence is that of Annexin A3 (Anxa3) from Rattus norvegicus (Rat).